The following is a 398-amino-acid chain: KiSS-1 receptor (398 aa).

Over 1–46 the chain is Extracellular; the sequence is MHTVATSGPNASWGAPANASGCPGCGANASDGPVPSPRAVDAWLVP. N-linked (GlcNAc...) asparagine glycosylation is found at Asn10, Asn18, and Asn28. The chain crosses the membrane as a helical span at residues 47 to 67; it reads LFFAALMLLGLVGNSLVIYVI. Topologically, residues 68-78 are cytoplasmic; the sequence is CRHKPMRTVTN. Residues 79 to 101 traverse the membrane as a helical segment; sequence FYIANLAATDVTFLLCCVPFTAL. At 102–120 the chain is on the extracellular side; that stretch reads LYPLPGWVLGDFMCKFVNY. Cysteines 115 and 191 form a disulfide. Residues 121-138 traverse the membrane as a helical segment; it reads IQQVSVQATCATLTAMSV. At 139–157 the chain is on the cytoplasmic side; the sequence is DRWYVTVFPLRALHRRTPR. The helical transmembrane segment at 158–178 threads the bilayer; that stretch reads LALAVSLSIWVGSAAVSAPVL. Over 179–202 the chain is Extracellular; that stretch reads ALHRLSPGPRAYCSEAFPSRALER. The chain crosses the membrane as a helical span at residues 203–223; that stretch reads AFALYNLLALYLLPLLATCAC. Residues 224–263 are Cytoplasmic-facing; it reads YAAMLRHLGRVAVRPAPADSALQGQVLAERAGAVRAKVSR. The chain crosses the membrane as a helical span at residues 264 to 284; the sequence is LVAAVVLLFAACWGPIQLFLV. At 285-305 the chain is on the extracellular side; it reads LQALGPAGSWHPRSYAAYALK. The chain crosses the membrane as a helical span at residues 306-328; sequence TWAHCMSYSNSALNPLLYAFLGS. Residues 329–398 are Cytoplasmic-facing; the sequence is HFRQAFRRVC…CVLGEDNAPL (70 aa). Residues 341 to 363 form a disordered region; that stretch reads APRRPRRPRRPGPSDPAAPHAEL.

This sequence belongs to the G-protein coupled receptor 1 family. As to expression, most highly expressed in the pancreas, placenta and spinal cord, with lower-level of expression in peripheral blood leukocytes, kidney, lung, fetal liver, stomach, small intestine, testes, spleen, thymus, adrenal glands and lymph nodes. In the adult brain, expressed in the superior frontal gyrus, putamen, caudate nucleus, cingulate gyrus, nucleus accumbens, hippocampus, pons and amygdala, as well as the hypothalamus and pituitary. Expression levels are higher in early (7-9 weeks) than term placentas. Expression levels were increased in both early placentas and molar pregnancies and were reduced in choriocarcinoma cells. Expressed at higher levels in first trimester trophoblasts than at term of gestation. Also found in the extravillous trophoblast suggesting endocrine/paracrine activation mechanism.

It localises to the cell membrane. In terms of biological role, receptor for metastin (kisspeptin-54 or kp-54), a C-terminally amidated peptide of KiSS1. KiSS1 is a metastasis suppressor protein that suppresses metastases in malignant melanomas and in some breast carcinomas without affecting tumorigenicity. The metastasis suppressor properties may be mediated in part by cell cycle arrest and induction of apoptosis in malignant cells. The receptor is essential for normal gonadotropin-released hormone physiology and for puberty. The hypothalamic KiSS1/KISS1R system is a pivotal factor in central regulation of the gonadotropic axis at puberty and in adulthood. The receptor is also probably involved in the regulation and fine-tuning of trophoblast invasion generated by the trophoblast itself. Analysis of the transduction pathways activated by the receptor identifies coupling to phospholipase C and intracellular calcium release through pertussis toxin-insensitive G(q) proteins. This is KiSS-1 receptor (KISS1R) from Homo sapiens (Human).